The following is a 441-amino-acid chain: Ribulose bisphosphate carboxylase large chain (441 aa).

N6,N6,N6-trimethyllysine is present on Lys5. The substrate site is built by Asn114 and Thr164. Lys166 functions as the Proton acceptor in the catalytic mechanism. Substrate is bound at residue Lys168. Mg(2+)-binding residues include Lys192, Asp194, and Glu195. Position 192 is an N6-carboxylysine (Lys192). Residue His285 is the Proton acceptor of the active site. Substrate-binding residues include Arg286, His318, and Ser370.

Belongs to the RuBisCO large chain family. Type I subfamily. Heterohexadecamer of 8 large chains and 8 small chains; disulfide-linked. The disulfide link is formed within the large subunit homodimers. It depends on Mg(2+) as a cofactor. In terms of processing, the disulfide bond which can form in the large chain dimeric partners within the hexadecamer appears to be associated with oxidative stress and protein turnover.

The protein resides in the plastid. The protein localises to the chloroplast. The enzyme catalyses 2 (2R)-3-phosphoglycerate + 2 H(+) = D-ribulose 1,5-bisphosphate + CO2 + H2O. It carries out the reaction D-ribulose 1,5-bisphosphate + O2 = 2-phosphoglycolate + (2R)-3-phosphoglycerate + 2 H(+). RuBisCO catalyzes two reactions: the carboxylation of D-ribulose 1,5-bisphosphate, the primary event in carbon dioxide fixation, as well as the oxidative fragmentation of the pentose substrate in the photorespiration process. Both reactions occur simultaneously and in competition at the same active site. This is Ribulose bisphosphate carboxylase large chain from Drosera petiolaris (Woolly sundew).